Consider the following 167-residue polypeptide: Lipoprotein signal peptidase (167 aa).

Transmembrane regions (helical) follow at residues 7 to 27 (LFLL…KYWV), 61 to 81 (FSHW…LWLW), and 87 to 107 (NKFL…GNLI). Residues D117 and D136 contribute to the active site. A helical membrane pass occupies residues 126–146 (IFYFAIFNLADSFITLGVIVI).

It belongs to the peptidase A8 family.

The protein localises to the cell inner membrane. It carries out the reaction Release of signal peptides from bacterial membrane prolipoproteins. Hydrolyzes -Xaa-Yaa-Zaa-|-(S,diacylglyceryl)Cys-, in which Xaa is hydrophobic (preferably Leu), and Yaa (Ala or Ser) and Zaa (Gly or Ala) have small, neutral side chains.. The protein operates within protein modification; lipoprotein biosynthesis (signal peptide cleavage). Functionally, this protein specifically catalyzes the removal of signal peptides from prolipoproteins. The sequence is that of Lipoprotein signal peptidase from Bartonella tribocorum (strain CIP 105476 / IBS 506).